We begin with the raw amino-acid sequence, 913 residues long: Protein translocase subunit SecA (913 aa).

ATP is bound by residues glutamine 87, 105–109, and aspartate 512; that span reads GEGKT. Cysteine 897, cysteine 899, cysteine 908, and histidine 909 together coordinate Zn(2+).

Belongs to the SecA family. In terms of assembly, monomer and homodimer. Part of the essential Sec protein translocation apparatus which comprises SecA, SecYEG and auxiliary proteins SecDF-YajC and YidC. Zn(2+) is required as a cofactor.

Its subcellular location is the cell inner membrane. It localises to the cytoplasm. The catalysed reaction is ATP + H2O + cellular proteinSide 1 = ADP + phosphate + cellular proteinSide 2.. Its function is as follows. Part of the Sec protein translocase complex. Interacts with the SecYEG preprotein conducting channel. Has a central role in coupling the hydrolysis of ATP to the transfer of proteins into and across the cell membrane, serving both as a receptor for the preprotein-SecB complex and as an ATP-driven molecular motor driving the stepwise translocation of polypeptide chains across the membrane. The sequence is that of Protein translocase subunit SecA from Pseudomonas syringae pv. syringae (strain B728a).